We begin with the raw amino-acid sequence, 342 residues long: MISSRQKLILKAIIDMYSEKGEPVGSKALMALPYLNYSSATLRYDMAVLEELGFLEKMHTSSGRVPSERGYRYYIEHLVTRDNDVTEVFPLIDEVFSKKALGREHTIKEALKLLTDLTSYTAVAVGPDILQSHIKRIEMVPLGLKDAVMLIVTDTGHVQHQQIHISDDMRMDDIKEVIHTLDDLLKNRTLEDALKVLKEEYAISELNQFMSYQSQIIDSFIEAFSKFASDSFYLSGMTNAFEQPEFNDVSHMKRFIDMMDRREIVKLIGTAEGISVRFGSDMEIKPLNQMTIISIPYQIDSKQKGTIALVGPSRMSYQKVIPLLEYIAANLAKLYKDNNKET.

It belongs to the HrcA family.

Negative regulator of class I heat shock genes (grpE-dnaK-dnaJ and groELS operons). Prevents heat-shock induction of these operons. The polypeptide is Heat-inducible transcription repressor HrcA (Acholeplasma laidlawii).